The sequence spans 234 residues: Leucyl/phenylalanyl-tRNA--protein transferase (234 aa).

It belongs to the L/F-transferase family.

The protein localises to the cytoplasm. It catalyses the reaction N-terminal L-lysyl-[protein] + L-leucyl-tRNA(Leu) = N-terminal L-leucyl-L-lysyl-[protein] + tRNA(Leu) + H(+). It carries out the reaction N-terminal L-arginyl-[protein] + L-leucyl-tRNA(Leu) = N-terminal L-leucyl-L-arginyl-[protein] + tRNA(Leu) + H(+). The catalysed reaction is L-phenylalanyl-tRNA(Phe) + an N-terminal L-alpha-aminoacyl-[protein] = an N-terminal L-phenylalanyl-L-alpha-aminoacyl-[protein] + tRNA(Phe). Functions in the N-end rule pathway of protein degradation where it conjugates Leu, Phe and, less efficiently, Met from aminoacyl-tRNAs to the N-termini of proteins containing an N-terminal arginine or lysine. This Citrobacter koseri (strain ATCC BAA-895 / CDC 4225-83 / SGSC4696) protein is Leucyl/phenylalanyl-tRNA--protein transferase.